Consider the following 461-residue polypeptide: Photosystem II CP43 reaction center protein (461 aa).

Positions 1–2 (ME) are excised as a propeptide. At Thr3 the chain carries N-acetylthreonine. The residue at position 3 (Thr3) is a Phosphothreonine. 5 helical membrane-spanning segments follow: residues 57 to 81 (LFEVAHFVPEKPMYEQGLILLPHLA), 122 to 143 (LIGPETLEETFPFFGYVWKDKN), 166 to 188 (KALYFGGVYDTWAPGGGDVRIIT), 243 to 263 (QPWAWTRRAFVWSGEAYLSYS), and 279 to 300 (WFNNTAYPSEFYGPTGPEASQS). Glu355 is a [CaMn4O5] cluster binding site. The chain crosses the membrane as a helical span at residues 435 to 459 (RARAAAAGFEKGIDRFNEPTLSLRP).

The protein belongs to the PsbB/PsbC family. PsbC subfamily. As to quaternary structure, PSII is composed of 1 copy each of membrane proteins PsbA, PsbB, PsbC, PsbD, PsbE, PsbF, PsbH, PsbI, PsbJ, PsbK, PsbL, PsbM, PsbT, PsbX, PsbY, PsbZ, Psb30/Ycf12, at least 3 peripheral proteins of the oxygen-evolving complex and a large number of cofactors. It forms dimeric complexes. Requires Binds multiple chlorophylls and provides some of the ligands for the Ca-4Mn-5O cluster of the oxygen-evolving complex. It may also provide a ligand for a Cl- that is required for oxygen evolution. PSII binds additional chlorophylls, carotenoids and specific lipids. as cofactor.

Its subcellular location is the plastid. The protein resides in the chloroplast thylakoid membrane. Functionally, one of the components of the core complex of photosystem II (PSII). It binds chlorophyll and helps catalyze the primary light-induced photochemical processes of PSII. PSII is a light-driven water:plastoquinone oxidoreductase, using light energy to abstract electrons from H(2)O, generating O(2) and a proton gradient subsequently used for ATP formation. The sequence is that of Photosystem II CP43 reaction center protein from Oedogonium cardiacum (Filamentous green alga).